Consider the following 128-residue polypeptide: Fluoride-specific ion channel FluC (128 aa).

The next 4 helical transmembrane spans lie at 7–29, 36–57, 65–94, and 98–126; these read LNFI…LGLR, PWGT…VALI, AWIR…DMLE, and YATA…VRLL. Residue asparagine 43 coordinates fluoride. Na(+)-binding residues include glycine 77 and threonine 80. 3 residues coordinate fluoride: tyrosine 104, serine 108, and serine 112.

It belongs to the fluoride channel Fluc/FEX (TC 1.A.43) family. Homodimer.

Its subcellular location is the cell inner membrane. The catalysed reaction is fluoride(in) = fluoride(out). Na(+) is not transported, but it plays an essential structural role and its presence is essential for fluoride channel function. The Na(+)-binding site is specific for Na(+) over most other cations including K(+) and Mg(2+). Fluoride efflux is inhibited by Li(2+). Its function is as follows. Fluoride-specific ion channel. Important for reducing fluoride concentration in the cell, thus reducing its toxicity. Is highly specific for fluoride ions and cannot transport chloride ions. This chain is Fluoride-specific ion channel FluC, found in Bordetella pertussis (strain Tohama I / ATCC BAA-589 / NCTC 13251).